A 505-amino-acid chain; its full sequence is Cysteine--tRNA ligase (505 aa).

A Zn(2+)-binding site is contributed by Cys-33. A 'HIGH' region motif is present at residues Pro-35 to Asn-45. Positions 229, 268, and 272 each coordinate Zn(2+). Residues Lys-301–Ser-305 carry the 'KMSKS' region motif. Lys-304 lines the ATP pocket.

It belongs to the class-I aminoacyl-tRNA synthetase family. In terms of assembly, monomer. Requires Zn(2+) as cofactor.

The protein localises to the cytoplasm. The enzyme catalyses tRNA(Cys) + L-cysteine + ATP = L-cysteinyl-tRNA(Cys) + AMP + diphosphate. The protein is Cysteine--tRNA ligase of Brucella anthropi (strain ATCC 49188 / DSM 6882 / CCUG 24695 / JCM 21032 / LMG 3331 / NBRC 15819 / NCTC 12168 / Alc 37) (Ochrobactrum anthropi).